Consider the following 505-residue polypeptide: MDLILLEKSLLAVFFAVIFSIIVSKLRGKKLKLPPGPFPVPVFGNWIQVGDDLNHRNLAGLAKKFGDIFLLRMGQRNLVVVSSPDLARDVLHTHGVEFGSRTRNVVFDIFTGKGQDMVFTVYGEHWRKMRRIMTVPFFTNKVVNQYRFGWEEEAARVVEDVKKDPMAAAEGIVLRRRLQLLMYNNMYRIMFDRRFESVDDPLFLKLTALNGERSRLAQSFEYNYGDFIPILRPFLRGYLKICKQVKERRFKLFKDYFLEERKKLASTKPTDNAGLKCAIDHILDAEKKGEINEDNVLYIVENINVAAIETTLWSIEWGIAELVNHPNVQQKLRNELDAVLGPGVQITEPDTYRLPYLQAVIKETLRLRMAIPLLVPHMNLYDAKLGSYDIPAESKILVNAWWLANNPAHWKDPQEFRPERFLEEEAKVEANGNDFRYIPFGVGRRSCPGIILALPILGITIGRLVQNFELLPPPGQDKLDTTEKGGQFSLHILKHSTIVAKPRVF.

Residues 3–23 (LILLEKSLLAVFFAVIFSIIV) traverse the membrane as a helical segment. (E)-cinnamate contacts are provided by residues 213–218 (RSRLAQ) and Ala306. Cys447 is a heme binding site.

This sequence belongs to the cytochrome P450 family. Heme serves as cofactor. As to expression, mostly expressed in stems, and, to a lower extent, in bulbs, roots, leaves and flowers.

The protein localises to the membrane. The enzyme catalyses (E)-cinnamate + reduced [NADPH--hemoprotein reductase] + O2 = (E)-4-coumarate + oxidized [NADPH--hemoprotein reductase] + H2O + H(+). Its pathway is alkaloid biosynthesis. It participates in phenylpropanoid metabolism; trans-4-coumarate biosynthesis; trans-4-coumarate from trans-cinnamate: step 1/1. In terms of biological role, catalyzes the first oxidative step of the phenylpropanoid pathway in higher plants by transforming trans-cinnamate into p-coumarate. The compounds formed by this pathway are essential components for lignification, pollination, and defense against ultraviolet light, predators and pathogens. Trans-4-coumarate is a precursor to all amaryllidaceae alkaloids such as galanthamine, lycorine and haemanthamine, and including haemanthamine- and crinamine-type alkaloids, promising anticancer agents. This Narcissus pseudonarcissus (Daffodil) protein is Trans-cinnamate 4-monooxygenase.